The chain runs to 796 residues: Cation/H(+) antiporter 6B (796 aa).

13 helical membrane passes run 54 to 74 (DFWEYPLPQLEIIILSIFLLW), 93 to 113 (SMMLVGAVLSEMFGSMQIPCL), 131 to 151 (IGAFAFVLDWFLRGVTTDVGI), 159 to 179 (SVVIGITSMIIPWQIGKLLYS), 194 to 213 (YTVMTFTMSMTPFTCVNMLL), 223 to 243 (FGQIAQSAGMVTDLLAFFLTV), 259 to 279 (LAFMAFFIFVYLVRQFMLWVI), 285 to 305 (GAPVKNVYLYIGLLLAYLSYL), 310 to 330 (FLFFGPLGAFALGLAVPNGPP), 344 to 364 (EGIFLPLFGSLSMIKLDWSFL), 382 to 402 (FSFLPIVYIAKFATSFLAALA), 411 to 431 (IILGVIMGTKSSFELGYVLTA), and 444 to 464 (LLGVYILVNSLLTPMAIHFLY).

It belongs to the monovalent cation:proton antiporter 2 (CPA2) transporter (TC 2.A.37) family. CHX (TC 2.A.37.4) subfamily. In terms of tissue distribution, preferentially expressed in pollen.

It is found in the membrane. May operate as a cation/H(+) antiporter. The polypeptide is Cation/H(+) antiporter 6B (CHX6b) (Arabidopsis thaliana (Mouse-ear cress)).